A 278-amino-acid chain; its full sequence is Octanoyl-[GcvH]:protein N-octanoyltransferase (278 aa).

The region spanning 41–247 (DISDNVVRTW…AIKDLGGVLN (207 aa)) is the BPL/LPL catalytic domain. Residue cysteine 146 is the Acyl-thioester intermediate of the active site.

It belongs to the octanoyltransferase LipL family.

It carries out the reaction N(6)-octanoyl-L-lysyl-[glycine-cleavage complex H protein] + L-lysyl-[lipoyl-carrier protein] = N(6)-octanoyl-L-lysyl-[lipoyl-carrier protein] + L-lysyl-[glycine-cleavage complex H protein]. The protein operates within protein modification; protein lipoylation via endogenous pathway; protein N(6)-(lipoyl)lysine from octanoyl-[acyl-carrier-protein]. Catalyzes the amidotransfer (transamidation) of the octanoyl moiety from octanoyl-GcvH to the lipoyl domain of the E2 subunit of lipoate-dependent enzymes. The polypeptide is Octanoyl-[GcvH]:protein N-octanoyltransferase (Staphylococcus aureus (strain NCTC 8325 / PS 47)).